The chain runs to 269 residues: MIKNTKKSQKNKILTLEDVSISYGTFEAVRNVFCNFKSGDITSLIGPSGCGKSTVLRALNRMNDLIPNCSLRGTVLFDGTNIYDKRVDPVEVRRRIGMVFQQPNPFPKSIYENIAFGARINGFVGDMDELVESSLRKAAVWSECKDKLNDSGYSLSGGQQQRLCIARTIAIEPEIILMDEPCSALDPISTLKIEETMHELKKNYTIIIVTHNMQQALRVSDMTAFFNAVEYEEGDGGKVGYLAEFDSTKKIFSSPKEKTTQEYISGKFG.

The 240-residue stretch at 14–253 (LTLEDVSISY…EFDSTKKIFS (240 aa)) folds into the ABC transporter domain. 46–53 (GPSGCGKS) is an ATP binding site.

This sequence belongs to the ABC transporter superfamily. Phosphate importer (TC 3.A.1.7) family. The complex is composed of two ATP-binding proteins (PstB), two transmembrane proteins (PstC and PstA) and a solute-binding protein (PstS).

The protein resides in the cell inner membrane. The catalysed reaction is phosphate(out) + ATP + H2O = ADP + 2 phosphate(in) + H(+). Its function is as follows. Part of the ABC transporter complex PstSACB involved in phosphate import. Responsible for energy coupling to the transport system. The polypeptide is Phosphate import ATP-binding protein PstB (Prochlorococcus marinus subsp. pastoris (strain CCMP1986 / NIES-2087 / MED4)).